The primary structure comprises 51 residues: Large ribosomal subunit protein bL33 (51 aa).

Belongs to the bacterial ribosomal protein bL33 family.

This Francisella philomiragia subsp. philomiragia (strain ATCC 25017 / CCUG 19701 / FSC 153 / O#319-036) protein is Large ribosomal subunit protein bL33.